Here is a 505-residue protein sequence, read N- to C-terminus: Trans-cinnamate 4-monooxygenase (505 aa).

A helical membrane pass occupies residues 3–23 (LLLVEKTLLALFAAIIASIFI). Residues 213–218 (RSRLAQ) and A306 each bind (E)-cinnamate. C447 serves as a coordination point for heme.

Belongs to the cytochrome P450 family. Heme is required as a cofactor.

It localises to the membrane. It catalyses the reaction (E)-cinnamate + reduced [NADPH--hemoprotein reductase] + O2 = (E)-4-coumarate + oxidized [NADPH--hemoprotein reductase] + H2O + H(+). It participates in phenylpropanoid metabolism; trans-4-coumarate biosynthesis; trans-4-coumarate from trans-cinnamate: step 1/1. Its function is as follows. Catalyzes the first oxidative step of the phenylpropanoid pathway in higher plants by transforming trans-cinnamate into p-coumarate. The compounds formed by this pathway are essential components for lignification, pollination, and defense against ultraviolet light, predators and pathogens. The chain is Trans-cinnamate 4-monooxygenase (CYP73A12) from Zinnia elegans (Garden zinnia).